Here is a 380-residue protein sequence, read N- to C-terminus: 3-dehydroquinate synthase (380 aa).

NAD(+)-binding positions include 100-104, 124-125, Lys-137, and Lys-146; these read GAASD and TT. Positions 179, 251, and 267 each coordinate Zn(2+).

This sequence belongs to the sugar phosphate cyclases superfamily. Dehydroquinate synthase family. The cofactor is NAD(+). It depends on Co(2+) as a cofactor. Zn(2+) is required as a cofactor.

Its subcellular location is the cytoplasm. It catalyses the reaction 7-phospho-2-dehydro-3-deoxy-D-arabino-heptonate = 3-dehydroquinate + phosphate. Its pathway is metabolic intermediate biosynthesis; chorismate biosynthesis; chorismate from D-erythrose 4-phosphate and phosphoenolpyruvate: step 2/7. Its function is as follows. Catalyzes the conversion of 3-deoxy-D-arabino-heptulosonate 7-phosphate (DAHP) to dehydroquinate (DHQ). This Tropheryma whipplei (strain TW08/27) (Whipple's bacillus) protein is 3-dehydroquinate synthase.